The chain runs to 81 residues: Sec-independent protein translocase protein TatA (81 aa).

Residues 1-21 (MGGISVWQLLIIAVIVVLLFG) traverse the membrane as a helical segment. Positions 42-81 (AMSDEDSAKNEKDADFEPKSLEKQQQKEAAPETKKDKEQA) are disordered.

It belongs to the TatA/E family. The Tat system comprises two distinct complexes: a TatABC complex, containing multiple copies of TatA, TatB and TatC subunits, and a separate TatA complex, containing only TatA subunits. Substrates initially bind to the TatABC complex, which probably triggers association of the separate TatA complex to form the active translocon.

The protein localises to the cell inner membrane. Its function is as follows. Part of the twin-arginine translocation (Tat) system that transports large folded proteins containing a characteristic twin-arginine motif in their signal peptide across membranes. TatA could form the protein-conducting channel of the Tat system. This is Sec-independent protein translocase protein TatA from Vibrio parahaemolyticus serotype O3:K6 (strain RIMD 2210633).